Consider the following 813-residue polypeptide: Leucine--tRNA ligase (813 aa).

The 'HIGH' region motif lies at 41–51 (PYPSGTLHMGH). Residues 575 to 579 (KMSKS) carry the 'KMSKS' region motif. Lys578 is an ATP binding site.

This sequence belongs to the class-I aminoacyl-tRNA synthetase family.

Its subcellular location is the cytoplasm. The catalysed reaction is tRNA(Leu) + L-leucine + ATP = L-leucyl-tRNA(Leu) + AMP + diphosphate. In Francisella philomiragia subsp. philomiragia (strain ATCC 25017 / CCUG 19701 / FSC 153 / O#319-036), this protein is Leucine--tRNA ligase.